The primary structure comprises 208 residues: MKINVVDHPLIKHKLTIMRKTDTGPKEFRELLKEITLLIAYEATRHLEIHETEIETPLEKTKGYFIDDKDVVIVPILRAGLGMSDGILQLLPNASVGHIGIYREPHTLEAVEYYAKLPKINENSFVFVLDPMLATGVSSVKALDIVKEHGAKNVILVTLIASPEGTRVVNDKHPDVIIYTASLDRELNSKGYILPGLGDAGDRLFRTK.

5-phospho-alpha-D-ribose 1-diphosphate-binding positions include arginine 78, arginine 103, and 130–138; that span reads DPMLATGVS. Residues isoleucine 193 and 198–200 contribute to the uracil site; that span reads GDA. Aspartate 199 is a 5-phospho-alpha-D-ribose 1-diphosphate binding site.

It belongs to the UPRTase family. Mg(2+) serves as cofactor.

It catalyses the reaction UMP + diphosphate = 5-phospho-alpha-D-ribose 1-diphosphate + uracil. It participates in pyrimidine metabolism; UMP biosynthesis via salvage pathway; UMP from uracil: step 1/1. Allosterically activated by GTP. Functionally, catalyzes the conversion of uracil and 5-phospho-alpha-D-ribose 1-diphosphate (PRPP) to UMP and diphosphate. The polypeptide is Uracil phosphoribosyltransferase (Thermosipho africanus (strain TCF52B)).